A 223-amino-acid chain; its full sequence is Translation initiation factor 6 (223 aa).

Belongs to the eIF-6 family.

Functionally, binds to the 50S ribosomal subunit and prevents its association with the 30S ribosomal subunit to form the 70S initiation complex. This chain is Translation initiation factor 6, found in Saccharolobus islandicus (strain Y.N.15.51 / Yellowstone #2) (Sulfolobus islandicus).